Consider the following 170-residue polypeptide: Crossover junction endodeoxyribonuclease RuvC (170 aa).

Residues Asp-11, Glu-71, and Asp-143 contribute to the active site. Asp-11, Glu-71, and Asp-143 together coordinate Mg(2+).

Belongs to the RuvC family. As to quaternary structure, homodimer which binds Holliday junction (HJ) DNA. The HJ becomes 2-fold symmetrical on binding to RuvC with unstacked arms; it has a different conformation from HJ DNA in complex with RuvA. In the full resolvosome a probable DNA-RuvA(4)-RuvB(12)-RuvC(2) complex forms which resolves the HJ. Mg(2+) serves as cofactor.

The protein resides in the cytoplasm. The catalysed reaction is Endonucleolytic cleavage at a junction such as a reciprocal single-stranded crossover between two homologous DNA duplexes (Holliday junction).. Its function is as follows. The RuvA-RuvB-RuvC complex processes Holliday junction (HJ) DNA during genetic recombination and DNA repair. Endonuclease that resolves HJ intermediates. Cleaves cruciform DNA by making single-stranded nicks across the HJ at symmetrical positions within the homologous arms, yielding a 5'-phosphate and a 3'-hydroxyl group; requires a central core of homology in the junction. The consensus cleavage sequence is 5'-(A/T)TT(C/G)-3'. Cleavage occurs on the 3'-side of the TT dinucleotide at the point of strand exchange. HJ branch migration catalyzed by RuvA-RuvB allows RuvC to scan DNA until it finds its consensus sequence, where it cleaves and resolves the cruciform DNA. This Rhizobium rhizogenes (strain K84 / ATCC BAA-868) (Agrobacterium radiobacter) protein is Crossover junction endodeoxyribonuclease RuvC.